The primary structure comprises 395 residues: MNGEENSDSIPIDLILEILSRLPAKSITRFHCVSKLWGSMLCRPYFNELFLTISSARPRLLFAFSKHGEWRFFSSPQPQNPYGKSSFVATADFHTKFSQNLNICNYTSGLVYFSAMWITKADVICNPSTGHYAMLPKLLLTYGETRSFFLFDPVGKQFKVLLMNKINNNETKDIHILTLGTRKVRWRKIQQCPLIHIVSHEWICINGALYYIAYNIDDFLGYIVCFDVRSEKFKCLNLNQDCFSERSTKLIYYKGKLGVVNLKYAHGGGFPLKLCMWVLEDVEKQEWTTSVYTLRDEDRVVKVYYDLFIVGITATGEIVLAKKKVCKPFYVFYFNLERNTLLSVEIQGFGEYQSCCSVHAFVDHVEDLNVYAFVEHMKKTYEYDATSISPSEQKL.

The F-box domain occupies Glu-4–Ile-53.

The protein is Putative F-box protein At5g42430 of Arabidopsis thaliana (Mouse-ear cress).